A 123-amino-acid chain; its full sequence is Immunoglobulin lambda variable 5-45 (123 aa).

Positions 1-19 are cleaved as a signal peptide; it reads MAWTPLLLLFLSHCTGSLS. A framework-1 region spans residues 20 to 44; that stretch reads QAVLTQPSSLSASPGASASLTCTLC. The Ig-like domain occupies 20–123; the sequence is QAVLTQPSSL…YCMIWHSSAS (104 aa). Residues C41 and C115 are joined by a disulfide bond. A complementarity-determining-1 region spans residues 45 to 53; the sequence is SGINVGTYR. The interval 54–70 is framework-2; sequence IYWYQQKPGSPPQYLLR. A disordered region spans residues 68-92; the sequence is LLRYKSDSDKQQGSGVPSRFSGSKD. The complementarity-determining-2 stretch occupies residues 71 to 77; sequence YKSDSDK. Residues 78-92 are compositionally biased toward polar residues; it reads QQGSGVPSRFSGSKD. The framework-3 stretch occupies residues 78–115; that stretch reads QQGSGVPSRFSGSKDASANAGILLISGLQSEDEADYYC. The tract at residues 116-123 is complementarity-determining-3; sequence MIWHSSAS.

As to quaternary structure, immunoglobulins are composed of two identical heavy chains and two identical light chains; disulfide-linked.

The protein resides in the secreted. It localises to the cell membrane. V region of the variable domain of immunoglobulin light chains that participates in the antigen recognition. Immunoglobulins, also known as antibodies, are membrane-bound or secreted glycoproteins produced by B lymphocytes. In the recognition phase of humoral immunity, the membrane-bound immunoglobulins serve as receptors which, upon binding of a specific antigen, trigger the clonal expansion and differentiation of B lymphocytes into immunoglobulins-secreting plasma cells. Secreted immunoglobulins mediate the effector phase of humoral immunity, which results in the elimination of bound antigens. The antigen binding site is formed by the variable domain of one heavy chain, together with that of its associated light chain. Thus, each immunoglobulin has two antigen binding sites with remarkable affinity for a particular antigen. The variable domains are assembled by a process called V-(D)-J rearrangement and can then be subjected to somatic hypermutations which, after exposure to antigen and selection, allow affinity maturation for a particular antigen. This chain is Immunoglobulin lambda variable 5-45, found in Homo sapiens (Human).